The sequence spans 510 residues: GMP synthase [glutamine-hydrolyzing] (510 aa).

Positions 5 to 195 constitute a Glutamine amidotransferase type-1 domain; sequence TVVVLDFGGQ…LFEICGLRGD (191 aa). The active-site Nucleophile is the Cys82. Residues His169 and Glu171 contribute to the active site. One can recognise a GMPS ATP-PPase domain in the interval 196–385; the sequence is WDLSDFISEA…LGIPAEILWR (190 aa). 223–229 contacts ATP; that stretch reads SGGVDSS.

As to quaternary structure, homodimer.

The catalysed reaction is XMP + L-glutamine + ATP + H2O = GMP + L-glutamate + AMP + diphosphate + 2 H(+). The protein operates within purine metabolism; GMP biosynthesis; GMP from XMP (L-Gln route): step 1/1. Catalyzes the synthesis of GMP from XMP. The sequence is that of GMP synthase [glutamine-hydrolyzing] from Syntrophomonas wolfei subsp. wolfei (strain DSM 2245B / Goettingen).